The sequence spans 1345 residues: DNA-directed RNA polymerase subunit beta (1345 aa).

This sequence belongs to the RNA polymerase beta chain family. As to quaternary structure, the RNAP catalytic core consists of 2 alpha, 1 beta, 1 beta' and 1 omega subunit. When a sigma factor is associated with the core the holoenzyme is formed, which can initiate transcription.

The catalysed reaction is RNA(n) + a ribonucleoside 5'-triphosphate = RNA(n+1) + diphosphate. Its function is as follows. DNA-dependent RNA polymerase catalyzes the transcription of DNA into RNA using the four ribonucleoside triphosphates as substrates. This is DNA-directed RNA polymerase subunit beta from Shewanella oneidensis (strain ATCC 700550 / JCM 31522 / CIP 106686 / LMG 19005 / NCIMB 14063 / MR-1).